The primary structure comprises 211 residues: ATP-dependent Clp protease proteolytic subunit (211 aa).

S106 serves as the catalytic Nucleophile. The active site involves H131.

It belongs to the peptidase S14 family. Fourteen ClpP subunits assemble into 2 heptameric rings which stack back to back to give a disk-like structure with a central cavity, resembling the structure of eukaryotic proteasomes.

It is found in the cytoplasm. The enzyme catalyses Hydrolysis of proteins to small peptides in the presence of ATP and magnesium. alpha-casein is the usual test substrate. In the absence of ATP, only oligopeptides shorter than five residues are hydrolyzed (such as succinyl-Leu-Tyr-|-NHMec, and Leu-Tyr-Leu-|-Tyr-Trp, in which cleavage of the -Tyr-|-Leu- and -Tyr-|-Trp bonds also occurs).. In terms of biological role, cleaves peptides in various proteins in a process that requires ATP hydrolysis. Has a chymotrypsin-like activity. Plays a major role in the degradation of misfolded proteins. This chain is ATP-dependent Clp protease proteolytic subunit, found in Maricaulis maris (strain MCS10) (Caulobacter maris).